The primary structure comprises 318 residues: Glycine--tRNA ligase alpha subunit (318 aa).

Positions 298–318 are disordered; sequence EAGGSSPSTSRQGEAPRGESQ. Residues 300–309 are compositionally biased toward polar residues; the sequence is GGSSPSTSRQ.

The protein belongs to the class-II aminoacyl-tRNA synthetase family. As to quaternary structure, tetramer of two alpha and two beta subunits.

Its subcellular location is the cytoplasm. It carries out the reaction tRNA(Gly) + glycine + ATP = glycyl-tRNA(Gly) + AMP + diphosphate. The chain is Glycine--tRNA ligase alpha subunit from Rhodopseudomonas palustris (strain BisB18).